We begin with the raw amino-acid sequence, 180 residues long: Large ribosomal subunit protein uL5c (180 aa).

Belongs to the universal ribosomal protein uL5 family. In terms of assembly, part of the 50S ribosomal subunit; contacts the 5S rRNA.

It is found in the plastid. The protein localises to the chloroplast. In terms of biological role, binds 5S rRNA, forms part of the central protuberance of the 50S subunit. In Oedogonium cardiacum (Filamentous green alga), this protein is Large ribosomal subunit protein uL5c (rpl5).